Here is a 372-residue protein sequence, read N- to C-terminus: Putative aminopeptidase SgcX (372 aa).

A divalent metal cation is bound by residues histidine 67 and aspartate 180. The active-site Proton acceptor is glutamate 212. A divalent metal cation is bound by residues glutamate 213, aspartate 235, and histidine 329.

Belongs to the peptidase M42 family. A divalent metal cation serves as cofactor.

This chain is Putative aminopeptidase SgcX (sgcX), found in Salmonella typhimurium (strain LT2 / SGSC1412 / ATCC 700720).